We begin with the raw amino-acid sequence, 283 residues long: ATP phosphoribosyltransferase (283 aa).

Belongs to the ATP phosphoribosyltransferase family. Long subfamily. It depends on Mg(2+) as a cofactor.

The protein localises to the cytoplasm. It catalyses the reaction 1-(5-phospho-beta-D-ribosyl)-ATP + diphosphate = 5-phospho-alpha-D-ribose 1-diphosphate + ATP. It participates in amino-acid biosynthesis; L-histidine biosynthesis; L-histidine from 5-phospho-alpha-D-ribose 1-diphosphate: step 1/9. Feedback inhibited by histidine. In terms of biological role, catalyzes the condensation of ATP and 5-phosphoribose 1-diphosphate to form N'-(5'-phosphoribosyl)-ATP (PR-ATP). Has a crucial role in the pathway because the rate of histidine biosynthesis seems to be controlled primarily by regulation of HisG enzymatic activity. The sequence is that of ATP phosphoribosyltransferase from Methanopyrus kandleri (strain AV19 / DSM 6324 / JCM 9639 / NBRC 100938).